Reading from the N-terminus, the 757-residue chain is Polyribonucleotide nucleotidyltransferase (757 aa).

Asp482 and Asp488 together coordinate Mg(2+). In terms of domain architecture, KH spans Pro549 to Met608. Positions Gly618–Arg686 constitute an S1 motif domain. A compositionally biased stretch (basic and acidic residues) spans Glu703–Asn714. The tract at residues Glu703 to Tyr757 is disordered. The span at Gly725 to Arg734 shows a compositional bias: basic residues.

It belongs to the polyribonucleotide nucleotidyltransferase family. Mg(2+) is required as a cofactor.

It localises to the cytoplasm. The enzyme catalyses RNA(n+1) + phosphate = RNA(n) + a ribonucleoside 5'-diphosphate. Functionally, involved in mRNA degradation. Catalyzes the phosphorolysis of single-stranded polyribonucleotides processively in the 3'- to 5'-direction. The chain is Polyribonucleotide nucleotidyltransferase from Wolbachia sp. subsp. Drosophila simulans (strain wRi).